The chain runs to 385 residues: uncharacterized protein (385 aa).

The next 8 helical transmembrane spans lie at 17 to 37, 72 to 92, 107 to 127, 155 to 175, 191 to 211, 295 to 315, 326 to 346, and 354 to 374; these read ILIILFVGFLFLISLIGFIFT, TELMVFILFNIMVLIESWFLL, WILKLVYITVYVVFVVIKCIT, ICLIVSLVIHCIGLFVGFYII, WIQAVKILFIVLISYTILVLL, AFPSGHIGATLIVGCTFFYFL, ITLLALYFLHLVSMSFAIVVN, and ITFTYLWLLPLIFLTHFFNSF.

Its subcellular location is the membrane. This is an uncharacterized protein from Mycoplasma capricolum subsp. capricolum (strain California kid / ATCC 27343 / NCTC 10154).